Reading from the N-terminus, the 85-residue chain is Alpha-insect toxin BjaIT (85 aa).

An N-terminal signal peptide occupies residues Met1–Ser19. The LCN-type CS-alpha/beta domain occupies Arg21–Arg83. Cystine bridges form between Cys31/Cys82, Cys35/Cys55, Cys41/Cys65, and Cys45/Cys67. Position 83 is an arginine amide (Arg83).

This sequence belongs to the long (4 C-C) scorpion toxin superfamily. Sodium channel inhibitor family. Alpha subfamily. As to expression, expressed by the venom gland.

It localises to the secreted. Its function is as follows. Alpha toxins bind voltage-independently at site-3 of sodium channels (Nav) and inhibit the inactivation of the activated channels, thereby blocking neuronal transmission. This toxin is active against insects (para/tipE). The polypeptide is Alpha-insect toxin BjaIT (Hottentotta judaicus (Black scorpion)).